The primary structure comprises 500 residues: Zinc finger protein PLAG1 (500 aa).

Residues 1 to 30 (MATVIPGDLSEVRDTQKVPSGKRKRGETKP) are disordered. The segment at 2-84 (ATVIPGDLSE…SKYKLQRHMA (83 aa)) is interaction with KPNA2. The Nuclear localization signal motif lies at 22–25 (KRKR). 7 C2H2-type zinc fingers span residues 34–56 (FPCQLCDKAFNSVEKLKVHSYSH), 62–86 (YKCIQQDCTKAFVSKYKLQRHMATH), 92–114 (HKCNYCEKMFHRKDHLKNHLHTH), 121–143 (FKCEECGKNYNTKLGFKRHLALH), 150–172 (LTCKVCLQTFESTGVLLEHLKSH), 185–207 (HQCEHCDRRFYTRKDVRRHMVVH), and 213–236 (FLCQYCAQRFGRKDHLTRHMKKSH). Positions 41–242 (KAFNSVEKLK…KKSHNQELLK (202 aa)) are decreased nuclear import with localization in the nucleus but also in the cytoplasm. Residues 243-384 (VKTEPVDFLD…QASSSSKLGL (142 aa)) form a repression domain; contains 3 sumoylation motifs and massively decrease transcription activity region. The segment at 243-500 (VKTEPVDFLD…TLPRFHQAFQ (258 aa)) is activates transcription; Inhibition of nuclear import due to lack of NLS and KPNA2 interaction. Residues Lys-244 and Lys-263 each participate in a glycyl lysine isopeptide (Lys-Gly) (interchain with G-Cter in SUMO) cross-link. The segment at 365 to 388 (GGVPSSSQDSQASSSSKLGLDPQI) is disordered. Positions 369 to 380 (SSSQDSQASSSS) are enriched in low complexity. A massively activates transcription region spans residues 385–500 (DPQIGSLDDG…TLPRFHQAFQ (116 aa)).

This sequence belongs to the krueppel C2H2-type zinc-finger protein family. In terms of assembly, interacts with KPNA2, which escorts protein to the nucleus via interaction with nuclear localization signal. Interacts with E3 SUMO-protein ligase PIAS1, PIAS2 and PIAS4. Sumoylated with SUMO1; which inhibits transcriptional activity, but does not affect nuclear localization. Blockers of sumoylation pathway such as SENP3 and inactive UBE2I increases transcriptional capacity. Sumoylation is increased in the presence of PIAS1. In terms of processing, acetylated by lysine acetyltransferase EP300; which activates transcriptional capacity. Lysine residues that are sumoylated also seem to be target for acetylation. Expressed in fetal tissues such as lung, liver and kidney. Not detected or weak detection in normal adult tissues, but highly expressed in salivary gland with benign or malignant pleiomorphic adenomas with or without 8q12 aberrations, with preferential occurrence in benign tumors.

The protein localises to the nucleus. Its function is as follows. Transcription factor whose activation results in up-regulation of target genes, such as IGFII, leading to uncontrolled cell proliferation: when overexpressed in cultured cells, higher proliferation rate and transformation are observed. Other target genes such as CRLF1, CRABP2, CRIP2, PIGF are strongly induced in cells with PLAG1 induction. Proto-oncogene whose ectopic expression can trigger the development of pleomorphic adenomas of the salivary gland and lipoblastomas. Overexpression is associated with up-regulation of IGFII, is frequently observed in hepatoblastoma, common primary liver tumor in childhood. Cooperates with CBFB-MYH11, a fusion gene important for myeloid leukemia. The polypeptide is Zinc finger protein PLAG1 (PLAG1) (Homo sapiens (Human)).